A 295-amino-acid polypeptide reads, in one-letter code: GATA transcription factor 18 (295 aa).

The GATA-type zinc finger occupies 148–202 (SLLARRCANCDTTSTPLWRNGPRGPKSLCNACGIRFKKEERRTTAATGNTVVGAA).

It belongs to the type IV zinc-finger family. Class B subfamily. As to quaternary structure, homodimer. Forms heterodimers with GATA19, GATA22 and GATA21. Interacts with JAG. Binds to AGO10/PNH. As to expression, expressed in vegetative and inflorescence shoot apical meristems (SAMs), axillary (SAMs), floral meristems, developing ovules and stamens, vascular tissues, and in the embryo.

It is found in the nucleus. Transcriptional factor that specifically binds 5'-GATA-3' or 5'-GAT-3' motifs within gene promoters (including its own promoter and GATA21 promoter), thus regulating the expression of genes mostly involved in hormone responses and floral organ specification (including genes regulating hormones responses). Regulates both flower and shoot apical meristem (SAM) development, especially for establishing organ boundaries in shoots and flowers, probably by controlling the number and position of WUS-expressing cells. Coregulates, with AGO10/PNH, the shoot apical meristem (SAM) organization. Regulates floral organ development via the promotion of JAG and NPR5/BOP2 expression. Modulates cytokinin homeostasis in organ boundaries by regulating CKX3 expression. Involved in cell proliferation and differentiation. Required to position the inductive proembryo boundary via the regulation of gene expression and for early embryonic development. Together with GIF1/AN3, mediates cotyledon identity by preventing ectopic root formation through the repression of PLT1 expression. The sequence is that of GATA transcription factor 18 from Arabidopsis thaliana (Mouse-ear cress).